The sequence spans 504 residues: Glutamate--tRNA ligase (504 aa).

Residues 14–24 (PSPTGYLHVGG) carry the 'HIGH' region motif. Residues 261–265 (KLSKR) carry the 'KMSKS' region motif. ATP is bound at residue Lys264.

The protein belongs to the class-I aminoacyl-tRNA synthetase family. Glutamate--tRNA ligase type 1 subfamily. In terms of assembly, monomer.

It is found in the cytoplasm. It carries out the reaction tRNA(Glu) + L-glutamate + ATP = L-glutamyl-tRNA(Glu) + AMP + diphosphate. Its function is as follows. Catalyzes the attachment of glutamate to tRNA(Glu) in a two-step reaction: glutamate is first activated by ATP to form Glu-AMP and then transferred to the acceptor end of tRNA(Glu). The protein is Glutamate--tRNA ligase of Chlorobium luteolum (strain DSM 273 / BCRC 81028 / 2530) (Pelodictyon luteolum).